A 426-amino-acid polypeptide reads, in one-letter code: UDP-N-acetylglucosamine 1-carboxyvinyltransferase (426 aa).

22-23 (KN) contacts phosphoenolpyruvate. R94 contacts UDP-N-acetyl-alpha-D-glucosamine. Catalysis depends on C118, which acts as the Proton donor. C118 carries the 2-(S-cysteinyl)pyruvic acid O-phosphothioketal modification. UDP-N-acetyl-alpha-D-glucosamine contacts are provided by residues 123-127 (RPVDL), D310, and I332.

Belongs to the EPSP synthase family. MurA subfamily.

The protein resides in the cytoplasm. It carries out the reaction phosphoenolpyruvate + UDP-N-acetyl-alpha-D-glucosamine = UDP-N-acetyl-3-O-(1-carboxyvinyl)-alpha-D-glucosamine + phosphate. Its pathway is cell wall biogenesis; peptidoglycan biosynthesis. Its function is as follows. Cell wall formation. Adds enolpyruvyl to UDP-N-acetylglucosamine. This Hyphomonas neptunium (strain ATCC 15444) protein is UDP-N-acetylglucosamine 1-carboxyvinyltransferase.